A 559-amino-acid polypeptide reads, in one-letter code: Leucine-rich repeat protein soc-2 (559 aa).

Residues 1-17 (METSKEFEFRPAKETSR) show a composition bias toward basic and acidic residues. Residues 1 to 55 (METSKEFEFRPAKETSRSKSPGGIVGRLSNFARNKARHSLSEKGSNSVGGSGGSG) are disordered. 20 LRR repeats span residues 74 to 95 (QDQR…IKEL), 97 to 118 (QLTE…IGQL), 120 to 141 (NLKK…LSSL), 143 to 164 (SLET…IYKI), 166 to 187 (SLET…IGNL), 189 to 210 (KLKM…IGKL), 212 to 233 (SLVV…IGEC), 235 to 257 (ALTQ…GKLT), 258 to 279 (NLVR…LESC), 281 to 302 (QLEE…LLTM), 305 to 326 (KIHT…GPQQ), 329 to 350 (PTVT…IFSK), 353 to 374 (RLTK…MGSW), 376 to 397 (SITE…IEKL), 399 to 420 (NLEI…IGNL), 422 to 443 (KLRE…IGFL), 445 to 466 (HLTK…IGNL), 468 to 489 (SLQD…IGHL), 491 to 513 (SLKS…LALC), and 515 to 536 (SLEI…ITAG).

Belongs to the SHOC2 family. As to quaternary structure, interacts with let-60.

Its function is as follows. Acts as a Ras effector and participates in MAPK pathway activation. Probably acts as a scaffolding protein in a protein phosphatase complex that specifically dephosphorylates Raf kinase and stimulates Raf activity at specialized signaling complexes upon Ras activation. Required for vulval development. Involved in fluid homeostasis. Plays a role in nicotinic acetylcholine receptor (nAChR)-mediated sensitivity to nicotine. This Caenorhabditis briggsae protein is Leucine-rich repeat protein soc-2 (soc-2).